The following is a 220-amino-acid chain: Protein DGCR6L (220 aa).

Residues 76 to 159 (KSLYNQRLRL…ADQQSTLEKA (84 aa)) adopt a coiled-coil conformation.

It belongs to the gonadal family. As to expression, widely expressed in fetal and adult tissues. Highest expression in liver, heart and skeletal muscle. Lower levels in pancreas and placenta. Weak expression in brain.

The protein resides in the nucleus. May play a role in neural crest cell migration into the third and fourth pharyngeal pouches. The protein is Protein DGCR6L (DGCR6L) of Homo sapiens (Human).